A 294-amino-acid polypeptide reads, in one-letter code: Flavin-dependent thymidylate synthase (294 aa).

The ThyX domain occupies 27–250 (GFIRVIDYMG…PFVYEAFEEY (224 aa)). Residues Thr73, 96–98 (RHR), and Glu104 contribute to the FAD site. Residues 93-96 (QWIR), 104-108 (EYSAR), and Arg189 each bind dUMP. Residues 96–106 (RHRTASVNEYS) carry the ThyX motif motif. FAD contacts are provided by residues 205–207 (NLH) and His211. Arg216 is a dUMP binding site. Arg216 acts as the Involved in ionization of N3 of dUMP, leading to its activation in catalysis.

The protein belongs to the thymidylate synthase ThyX family. In terms of assembly, homotetramer. It depends on FAD as a cofactor.

It catalyses the reaction dUMP + (6R)-5,10-methylene-5,6,7,8-tetrahydrofolate + NADPH + H(+) = dTMP + (6S)-5,6,7,8-tetrahydrofolate + NADP(+). The protein operates within pyrimidine metabolism; dTTP biosynthesis. Functionally, catalyzes the reductive methylation of 2'-deoxyuridine-5'-monophosphate (dUMP) to 2'-deoxythymidine-5'-monophosphate (dTMP) while utilizing 5,10-methylenetetrahydrofolate (mTHF) as the methyl donor, and NADPH and FADH(2) as the reductant. The polypeptide is Flavin-dependent thymidylate synthase (Rickettsia conorii (strain ATCC VR-613 / Malish 7)).